A 316-amino-acid chain; its full sequence is Transaldolase (316 aa).

Residue lysine 132 is the Schiff-base intermediate with substrate of the active site.

The protein belongs to the transaldolase family. Type 1 subfamily. As to quaternary structure, homodimer.

The protein resides in the cytoplasm. The catalysed reaction is D-sedoheptulose 7-phosphate + D-glyceraldehyde 3-phosphate = D-erythrose 4-phosphate + beta-D-fructose 6-phosphate. It functions in the pathway carbohydrate degradation; pentose phosphate pathway; D-glyceraldehyde 3-phosphate and beta-D-fructose 6-phosphate from D-ribose 5-phosphate and D-xylulose 5-phosphate (non-oxidative stage): step 2/3. Functionally, transaldolase is important for the balance of metabolites in the pentose-phosphate pathway. The polypeptide is Transaldolase (Vibrio cholerae serotype O1 (strain ATCC 39541 / Classical Ogawa 395 / O395)).